A 303-amino-acid polypeptide reads, in one-letter code: ATP phosphoribosyltransferase (303 aa).

It belongs to the ATP phosphoribosyltransferase family. Long subfamily. Requires Mg(2+) as cofactor.

The protein localises to the cytoplasm. The catalysed reaction is 1-(5-phospho-beta-D-ribosyl)-ATP + diphosphate = 5-phospho-alpha-D-ribose 1-diphosphate + ATP. Its pathway is amino-acid biosynthesis; L-histidine biosynthesis; L-histidine from 5-phospho-alpha-D-ribose 1-diphosphate: step 1/9. With respect to regulation, feedback inhibited by histidine. Catalyzes the condensation of ATP and 5-phosphoribose 1-diphosphate to form N'-(5'-phosphoribosyl)-ATP (PR-ATP). Has a crucial role in the pathway because the rate of histidine biosynthesis seems to be controlled primarily by regulation of HisG enzymatic activity. The polypeptide is ATP phosphoribosyltransferase (Haemophilus influenzae (strain 86-028NP)).